The primary structure comprises 121 residues: MKFLVFLGIITTVAAFHQECSLQSCTQHQPYVVDDPCPIHFYSKWYIRVGARKSAPLIELCVDEAGSKSPIQYIDIGNYTVSCLPFTINCQEPKLGSLVVRCSFYEDFLEYHDVRVVLDFI.

The first 15 residues, 1–15, serve as a signal peptide directing secretion; the sequence is MKFLVFLGIITTVAA. Residues 19-121 form the SARS ORF8 Ig-like domain; sequence ECSLQSCTQH…HDVRVVLDFI (103 aa). 3 cysteine pairs are disulfide-bonded: cysteine 25-cysteine 90, cysteine 37-cysteine 102, and cysteine 61-cysteine 83. Asparagine 78 is a glycosylation site (N-linked (GlcNAc...) (complex) asparagine; by host).

As to quaternary structure, homodimer. Interacts with host IL17RA. Interacts with host IL17RC. Interacts with host MHC-I. In terms of processing, glycosylated by the host when secreted via the conventional pathway. The glycosylated form cannot bind IL17A and would not participate in the cytokine storm.

The protein localises to the secreted. Functionally, plays a role in modulating the host immune response. May act as a secreted virokine by mimicking interleukin-17A (IL17A), and thereby binding to the IL17RA receptor, leading to activation of the IL17 pathway and increased secretion of pro-inflammatory factors. Contributes to the cytokine storm during SARS-CoV-2 infection when secreted by unconventional pathway. May act by down-regulating major histocompability complex class I (MHC-I) at cell surface. May inhibit expression of some members of the IFN-stimulated gene (ISG) family including hosts IGF2BP1/ZBP1, MX1 and MX2, and DHX58. The protein is ORF8 protein of Severe acute respiratory syndrome coronavirus 2 (2019-nCoV).